Consider the following 1325-residue polypeptide: MNRIYRVIWNCTLQVFQACSELTRRAGKTSTVNLRKSSGLTTKFSRLTLGVLLALSGSASGASLEVDNDQITNIDTDVAYDAYLVGWYGTGVLNILAGGNASLTTITTSVIGANEDSEGTVNVLGGTWRLYDSGNNARPLNVGQSGTGTLNIKQKGHVDGGYLRLGSSTGGVGTVNVEGEDSVLTTELFEIGSYGTGSLNITDKGYVTSSIVAILGYQAGSNGQVVVEKGGEWLIKNNDSSIEFQIGNQGTGEATIREGGLVTAENTIIGGNATGIGTLNVQDQDSVITVRRLYNGYFGNGTVNISNNGLINNKEYSLVGVQDGSHGVVNVTDKGHWNFLGTGEAFRYIYIGDAGDGELNVSSEGKVDSGIITAGMKETGTGNITVKDKNSVITNLGTNLGYDGHGEMNISNQGLVVSNGGSSLGYGETGVGNVSITTGGMWEVNKNVYTTIGVAGVGNLNISDGGKFVSQNITFLGDKASGIGTLNLMDATSSFDTVGINVGNFGSGIVNVSNGATLNSTGYGFIGGNASGKGIVNISTDSLWNLKTSSTNAQLLQVGVLGTGELNITTGGIVKARDTQIALNDKSKGDVRVDGQNSLLETFNMYVGTSGTGTLTLTNNGTLNVEGGEVYLGVFEPAVGTLNIGAAHGEAAADAGFITNATKVEFGLGEGVFVFNHTNNSDAGYQVDMLITGDDKDGKVIHDAGHTVFNAGNTYSGKTLVNDGLLTIASHTADGVTGMGSSEVTIANPGTLDILASTNSAGDYTLTNALKGDGLMRVQLSSSDKMFGFTHATGTEFAGVAQLKDSTFTLERDNTAALTHAMLQSDSENTTSVKVGEQSIGGLAMNGGTIIFDTDIPAATLAEGYISVDTLVVGAGDYTWKGRNYQVNGTGDVLIDVPKPWNDPMANNPLTTLNLLEHDDSHVGVQLVKAQTVIGSGGSLTLRDLQGDEVEADKTLHIAQNGTVVAEGDYGFRLTTAPGNGLYVNYGLKALNIHGGQKLTLAEHGGAYGATADMSAKIGGEGDLAINTVRQVSLSNGQNDYQGATYVQMGTLRTDADGALGNTRELNISNAAIVDLNGSTQTVETFTGQMGSTVLFKEGALTVNKGGISQGELTGGGNLNVTGGTLAIEGLNARYNALTSISPNAEVSLDNTQGLGRGNIANDGLLTLKNVTGELRNSISGKGIVSATARTDVELDGDNSRFVGQFNIDTGSALSVNEQKNLGDASVINNGLLTISTERSWAMTHSISGSGDVTKLGTGILTLNNDSAAYQGTTDIVGGEIAFGSDSAINMASQHINIHNSGVMSGNVTTAGDMNVMPGGGTACR.

The N-terminal stretch at 1-18 (MNRIYRVIWNCTLQVFQA) is a signal peptide. Residue cysteine 19 is the site of N-palmitoyl cysteine attachment. A lipid anchor (S-diacylglycerol cysteine) is attached at cysteine 19.

This sequence to E.coli YfaL.

The protein localises to the cell membrane. This is an uncharacterized protein from Escherichia coli (strain K12).